Here is a 211-residue protein sequence, read N- to C-terminus: Uracil phosphoribosyltransferase (211 aa).

5-phospho-alpha-D-ribose 1-diphosphate contacts are provided by residues arginine 78, arginine 103, and aspartate 130–serine 138. Residues isoleucine 193 and glycine 198–alanine 200 contribute to the uracil site. Aspartate 199 lines the 5-phospho-alpha-D-ribose 1-diphosphate pocket.

It belongs to the UPRTase family. It depends on Mg(2+) as a cofactor.

It catalyses the reaction UMP + diphosphate = 5-phospho-alpha-D-ribose 1-diphosphate + uracil. The protein operates within pyrimidine metabolism; UMP biosynthesis via salvage pathway; UMP from uracil: step 1/1. Its activity is regulated as follows. Allosterically activated by GTP. Catalyzes the conversion of uracil and 5-phospho-alpha-D-ribose 1-diphosphate (PRPP) to UMP and diphosphate. This chain is Uracil phosphoribosyltransferase, found in Acinetobacter baylyi (strain ATCC 33305 / BD413 / ADP1).